A 333-amino-acid polypeptide reads, in one-letter code: Quinolinate synthase (333 aa).

Residues histidine 41 and serine 58 each contribute to the iminosuccinate site. [4Fe-4S] cluster is bound at residue cysteine 103. Iminosuccinate-binding positions include 129–131 and serine 146; that span reads YIN. Residue cysteine 189 coordinates [4Fe-4S] cluster. Iminosuccinate contacts are provided by residues 215–217 and threonine 232; that span reads HPE. Cysteine 282 is a [4Fe-4S] cluster binding site.

It belongs to the quinolinate synthase family. Type 2 subfamily. Requires [4Fe-4S] cluster as cofactor.

It is found in the cytoplasm. The catalysed reaction is iminosuccinate + dihydroxyacetone phosphate = quinolinate + phosphate + 2 H2O + H(+). It functions in the pathway cofactor biosynthesis; NAD(+) biosynthesis; quinolinate from iminoaspartate: step 1/1. In terms of biological role, catalyzes the condensation of iminoaspartate with dihydroxyacetone phosphate to form quinolinate. The chain is Quinolinate synthase from Prochlorococcus marinus (strain MIT 9303).